The following is a 2324-amino-acid chain: MSNGYRTLSQHLNDLKKENFSLKLRIYFLEERMQQKYEVSREDVYKRNIELKVEVESLKRELQDRKQHLHKTWADEEDLNSQNEAELRRQVEEPQQETEHVYELLDNNIQLLQEESRFAKDEATQMETLVEAEKGCNLELSERWKDATKNREDAPGDQVKLDQYSAALAQRDRRIEELRQSLAAQEGLVEQLSREKQQLLHLLEEPGGMEVQPMPKGLPTQQKPDLNETPTTQPSVSDSHLAELQDKIQQTEVTNKILQEKLNDMSCELRSAQESSQKQDTTIQSLKEMLKSRESETEELYQVIEGQNDTMAKLPEMLHQSQLGQLQSSEGIAPAQQQVALLDLQSALFCSQLEIQKLQRLLRQKERQLADGKRCMQFVEAAAQEREQQKEAAWKHNQELRKALQHLQGELHSKSQQLHVLEAEKYNEIRTQGQNIQHLSHSLSHKEQLIQELQELLQYRDTTDKTLDTNEVFLEKLRQRIQDRAVALERVIDEKFSALEEKDKELRQLRLAVRDRDHDLERLRCVLSANEATMQSMESLLRARGLEVEQLIATCQNLQWLKEELETKFGHWQKEQESIIQQLQTSLHDRNKEVEDLSATLLHKLGPGQSEVAEELCQRLQRKERVLQDLLSDRNKQAMEHEMEVQGLLQSMGTREQERQAVAEKMVQAFMERNSELQALRQYLGGKELMAASQAFISNQPAGATSVGPHHGEQTDQGSTQMPSRDDSTSLTAREEASIPRSTLGDSDTVAGLEKELSNAKEELELMAKKERESQIELSALQSMMAVQEEELQVQAADLESLTRNIQIKEDLIKDLQMQLVDPEDMPAMERLTQEVLLLREKVASVEPQGQEGSENRRQQLLLMLEGLVDERSRLNEALQAERQLYSSLVKFHAQPETFERDRTLQVELEGAQVLRSRLEEVLGRSLERLSRLETLAAIGGATAGDETEDTSTQFTDSIEEEAAHNSHQQLIKVSLEKSLTTMETQNTCLQPPSPVGEDGNRHLQEEMLHLRAEIHQPLEEKRKAEAELKELKAQIEEAGFSSVSHIRNTMLSLCLENAELKEQMGEAMSDGWEVEEDKEKGEVMVETVVAKGGLSEDSLQAEFRKVQGRLKSAYNIINLLKEQLVLRSSEGNTKEMPEFLVRLAREVDRMNMGLPSSEKHQHQEQENMTARPGPRPQSLKLGTALSVDGYQLENKSQAQDSGHQPEFSLPGSTKHLRSQLAQCRQRYQDLQEKLLISEATVFAQANQLEKYRAILSESLVKQDSKQIQVDLQDLGYETCGRSENEAEREETTSPECEEHGNLKPVVLVEGLCSEQGYLDPVLVSSPVKNPWRTSQEARGVQAQGTSDDSSLLRKDIRDLKAQLQNAYKVIQNLRSRVRSLSATSDYSSSLERPRKLRAVATLEGASPHSVTDEDEGLLSDGTGAFYPPGLQAKKNLENLIQRVSQLEAQLPKTGLEGKLAEELKSASWPGKYDSLIQDQARKTVISASENTKREKDLFSSHPTFERYVKSFEDLLRNNDLTTYLGQSFREQLSSRRSVTDRLTSKFSTKDHKSEKEEAGLEPLALRLSRELQEKEKVIEVLQAKLDTRFSSPPSSHAASDSHRSASSTSFLSDDIEACSDMDVASEYTHYEEKKPSPSNSAASASQGLKGEPRSSSISLPTPQNPPKEASQAQPGFHFNSIPKPASLSQAPMHFTVPSFMPFGPSGPPLLGCCETPVVSLAEAQQELQMLQKQLGRSVSIAPPTSTSTLLSNHTEASSPRYSNPAQPHSPARGTIELGRILEPGYLGSGQWDMMRPQKGSISGELSSGSSMYQLNSKPTGADLLEEHLGEIRNLRQRLEESICVNDRLREQLQHRLSSTARENGSTSHFYSQGLESMPQLYNENRALREENQSLQTRLSHASRGHSQEVDHLREALLSSSSQLQELEKELEQQKAERRQLLEDLQEKQDEIVHFREERLSLQENNSRLQHKLALLQQQCEEKQQLSLSLQSELQIYESLYENPKKGLKAFSLDSCYQVPGELSCLVAEIRALRVQLEQSIQVNNRLRLQLEQQMDHGAGKASLSSCPVNQSFSAKAELANQQPPFQGSAASPPVRDVGLNSPPVVLPSNSCSVPGSDSAIISRTNNGSDESAATKTPPKMEVDAADGPFASGHGRHVIGHVDDYDALQQQIGEGKLLIQKILSLTRPARSVPALDAQGTEAPGTKSVHELRSSARALNHSLEESASLLTMFWRAALPNSHGSVLVGEEGNLMEKELLDLRAQVSQQQQLLQSTAVRLKTANQRKKSMEQFIVSHLTRTHDVLKKARTNLEMKSFRALMCTPAL.

Coiled coils occupy residues 41–132 (REDV…LVEA), 158–205 (QVKL…LLEE), 238–288 (DSHL…SLKE), and 348–638 (LFCS…NKQA). Disordered stretches follow at residues 72–96 (TWADEEDLNSQNEAELRRQVEEPQQ) and 205–240 (EPGGMEVQPMPKGLPTQQKPDLNETPTTQPSVSDSH). Residues 85–96 (AELRRQVEEPQQ) show a composition bias toward basic and acidic residues. Positions 219–238 (PTQQKPDLNETPTTQPSVSD) are enriched in polar residues. A disordered region spans residues 701–747 (PAGATSVGPHHGEQTDQGSTQMPSRDDSTSLTAREEASIPRSTLGDS). The residue at position 705 (threonine 705) is a Phosphothreonine. The segment covering 724-738 (SRDDSTSLTAREEAS) has biased composition (basic and acidic residues). 3 coiled-coil regions span residues 745–822 (GDSD…QLVD), 855–923 (ENRR…EEVL), and 1011–1043 (LRAEIHQPLEEKRKAEAELKELKAQIEEAGFSS). Disordered stretches follow at residues 1155–1182 (LPSSEKHQHQEQENMTARPGPRPQSLKL) and 1195–1216 (NKSQAQDSGHQPEFSLPGSTKH). 3 coiled-coil regions span residues 1213–1241 (STKHLRSQLAQCRQRYQDLQEKLLISEAT), 1346–1384 (TSDDSSLLRKDIRDLKAQLQNAYKVIQNLRSRVRSLSAT), and 1430–1455 (GLQAKKNLENLIQRVSQLEAQLPKTG). Disordered stretches follow at residues 1540 to 1559 (TDRLTSKFSTKDHKSEKEEA), 1589 to 1610 (RFSSPPSSHAASDSHRSASSTS), 1628 to 1685 (YTHY…IPKP), 1742 to 1773 (APPTSTSTLLSNHTEASSPRYSNPAQPHSPAR), 1857 to 1877 (LSSTARENGSTSHFYSQGLES), and 2081 to 2140 (NQQP…TPPK). The 92-residue stretch at 1550-1641 (KDHKSEKEEA…EEKKPSPSNS (92 aa)) folds into the Olduvai domain. Composition is skewed to low complexity over residues 1591–1610 (SSPPSSHAASDSHRSASSTS) and 1637–1646 (SPSNSAASAS). The span at 1743 to 1767 (PPTSTSTLLSNHTEASSPRYSNPAQ) shows a compositional bias: polar residues. Residues 1821–2056 (GADLLEEHLG…LRLQLEQQMD (236 aa)) adopt a coiled-coil conformation. Composition is skewed to polar residues over residues 2081-2090 (NQQPPFQGSA) and 2108-2135 (PSNSCSVPGSDSAIISRTNNGSDESAAT). Residues 2248–2274 (EEGNLMEKELLDLRAQVSQQQQLLQST) are a coiled coil.

As to quaternary structure, interacts with PDE4D. May interact with MAPRE1 and MAPRE3. May form a pericentrosomal complex with AKAP9, CDK5RAP2 and EB1/MAPRE1 in an isoform-specific manner; within this complex, may mediate MAPRE1-binding to CDK5RAP2. Interaction with AKAP9 stabilizes both proteins. May interact with CAMSAP2 in an isoform-specific manner; this interaction is much stronger in the presence of AKAP9. In complex with AKAP9, recruits CAMSAP2 to the Golgi apparatus. May interact with unglycosylated LGALS3BP in an isoform-specific manner; this interaction may connect the pericentrosomal complex to the gamma-tubulin ring complex (gamma-TuRC) to promote microtubule assembly and acetylation. In terms of tissue distribution, abundantly expressed in heart and skeletal muscle and to a lower extent in brain, lung and liver. Expressed in heart, skeletal muscle and testis (at protein level).

It is found in the cytoplasm. The protein localises to the cytoskeleton. The protein resides in the microtubule organizing center. Its subcellular location is the centrosome. It localises to the golgi apparatus. In terms of biological role, functions as an anchor sequestering components of the cAMP-dependent pathway to Golgi and/or centrosomes. May participate in microtubule dynamics, promoting microtubule assembly, in an isoform-specific manner. Depending upon the cell context, may act at the level of the Golgi apparatus or that of the centrosome. In complex with AKAP9, recruits CAMSAP2 to the Golgi apparatus and tethers non-centrosomal minus-end microtubules to the Golgi, an important step for polarized cell movement. In complex with AKAP9, EB1/MAPRE1 and CDK5RAP2, contributes to microtubules nucleation and extension from the centrosome to the cell periphery, a crucial process for directed cell migration, mitotic spindle orientation and cell-cycle progression. This Rattus norvegicus (Rat) protein is Myomegalin (Pde4dip).